We begin with the raw amino-acid sequence, 147 residues long: Deoxyuridine 5'-triphosphate nucleotidohydrolase (147 aa).

Residues 67–69, N80, and 84–86 each bind substrate; these read RSG and TID.

The protein belongs to the dUTPase family. Mg(2+) is required as a cofactor.

The catalysed reaction is dUTP + H2O = dUMP + diphosphate + H(+). Its pathway is pyrimidine metabolism; dUMP biosynthesis; dUMP from dCTP (dUTP route): step 2/2. Its function is as follows. This enzyme is involved in nucleotide metabolism: it produces dUMP, the immediate precursor of thymidine nucleotides and it decreases the intracellular concentration of dUTP so that uracil cannot be incorporated into DNA. The chain is Deoxyuridine 5'-triphosphate nucleotidohydrolase from Anaeromyxobacter dehalogenans (strain 2CP-C).